The sequence spans 265 residues: tRNA pseudouridine synthase A (265 aa).

The active-site Nucleophile is aspartate 58. Residue tyrosine 116 participates in substrate binding.

This sequence belongs to the tRNA pseudouridine synthase TruA family. In terms of assembly, homodimer.

It catalyses the reaction uridine(38/39/40) in tRNA = pseudouridine(38/39/40) in tRNA. Functionally, formation of pseudouridine at positions 38, 39 and 40 in the anticodon stem and loop of transfer RNAs. The sequence is that of tRNA pseudouridine synthase A from Neisseria gonorrhoeae (strain NCCP11945).